The following is a 372-amino-acid chain: 7-methylxanthosine synthase 1 (372 aa).

Tyr-18 serves as a coordination point for S-adenosyl-L-homocysteine. Residues Asn-21 and Asn-25 each coordinate xanthosine. Positions 62, 67, 101, 102, 140, 141, and 157 each coordinate S-adenosyl-L-homocysteine. Tyr-158 is a xanthosine binding site. An S-adenosyl-L-homocysteine-binding site is contributed by Cys-159. Positions 161 and 162 each coordinate xanthosine. Positions 179, 261, 263, and 264 each coordinate Mg(2+). 3 residues coordinate xanthosine: Ser-316, Tyr-321, and Tyr-356.

This sequence belongs to the methyltransferase superfamily. Type-7 methyltransferase family. The cofactor is Mg(2+). In terms of tissue distribution, expressed in stems, young leaves, floral buds, developing endosperm and immature fruits (grains). Detected in roots and old leaves, but not in mature fruits.

It carries out the reaction xanthosine + S-adenosyl-L-methionine = 7-methylxanthosine + S-adenosyl-L-homocysteine. The protein operates within alkaloid biosynthesis. Its function is as follows. Involved in the biosynthesis of caffeine. Specific for xanthosine and could not use xanthosine 5'-monophosphate (XMP) as substrate. Catalyzes the 7-N-methylation activity of xanthosine, but does not have 1-N- or 3-N-methylation activity. The sequence is that of 7-methylxanthosine synthase 1 from Coffea arabica (Arabian coffee).